The following is a 591-amino-acid chain: MRTHYCGNLNKSLAGQTVELCGWVNRRRDLGGLIFIDMRDREGIVQVVVDPDMKDVFEVASQLRNEFCIKFTGEVRVRPDSQVNKDMATGEVELLATGLEIINRSAALPLDFNQTNSEEQRLKYRYIDLRRPEMSDRIKLRARASSFVRRFLDENLFLDIETPVLTKATPEGARDYLVPSRVHKGSFYALPQSPQLFKQLLMMSGFDRYYQIVKCFRDEDLRADRQPEFTQIDIETSFMTSQEVRNVTERLVHDMWKELLDVELGQFPVMPFSEAMRRFGSDKPDLRNPLELVDVADLVKDVDFKVFSGPANDEKGRVAVIRVSGGASLSRKQIDEYGNFVGIYGAKGLAWMKVNDRAAGFEGVQSPVAKFLNEEVINAILERTQAETGDIILFGADKAGIVSEAMGALRLKLGTDLELTDTSAWAPLWVVDFPMFEEDGEGNLHAMHHPFTSPLGVSAEELQANPAAANSDAYDMVINGYEVGGGSVRIHNAEMQTAVFGILGIEAQEQQEKFGFLLEALKYGTPPHAGLAFGLDRLAMLLCGTENIRDVIAFPKTTAAACLLTDAPSLANPASLEELAIAVKLAEKKDA.

Position 171 (glutamate 171) interacts with L-aspartate. The aspartate stretch occupies residues glutamine 195–lysine 198. Arginine 217 is an L-aspartate binding site. ATP is bound by residues arginine 217–glutamate 219 and glutamine 226. Histidine 448 provides a ligand contact to L-aspartate. Residue glutamate 482 coordinates ATP. L-aspartate is bound at residue arginine 489. Glycine 534 to arginine 537 provides a ligand contact to ATP.

Belongs to the class-II aminoacyl-tRNA synthetase family. Type 1 subfamily. In terms of assembly, homodimer.

Its subcellular location is the cytoplasm. It carries out the reaction tRNA(Asp) + L-aspartate + ATP = L-aspartyl-tRNA(Asp) + AMP + diphosphate. Functionally, catalyzes the attachment of L-aspartate to tRNA(Asp) in a two-step reaction: L-aspartate is first activated by ATP to form Asp-AMP and then transferred to the acceptor end of tRNA(Asp). The protein is Aspartate--tRNA ligase of Aliivibrio fischeri (strain MJ11) (Vibrio fischeri).